The sequence spans 440 residues: Serine hydroxymethyltransferase (440 aa).

A (6S)-5,6,7,8-tetrahydrofolate-binding site is contributed by 123 to 125 (GHI). The residue at position 238 (Lys238) is an N6-(pyridoxal phosphate)lysine.

It belongs to the SHMT family. Homodimer. The cofactor is pyridoxal 5'-phosphate.

It is found in the cytoplasm. It participates in amino-acid biosynthesis; glycine biosynthesis; glycine from L-serine: step 1/1. Functionally, catalyzes the reversible interconversion of serine and glycine with a modified folate serving as the one-carbon carrier. Also exhibits a pteridine-independent aldolase activity toward beta-hydroxyamino acids, producing glycine and aldehydes, via a retro-aldol mechanism. The polypeptide is Serine hydroxymethyltransferase (Nitrosopumilus maritimus (strain SCM1)).